The primary structure comprises 385 residues: Glucans biosynthesis protein C (385 aa).

The next 10 helical transmembrane spans lie at 17–37 (AWLM…SHTW), 60–80 (MQVF…RYPL), 91–111 (VGIP…IMLQ), 137–157 (ISHL…VWIF), 173–193 (KFSM…YAVI), 212–232 (FIVM…LAFI), 239–259 (LFTT…VAYL), 274–294 (TESV…FSFG), 311–331 (ASLF…AYIT), and 338–358 (WLGF…LYEI).

Belongs to the acyltransferase 3 family. OpgC subfamily.

The protein localises to the cell membrane. The protein operates within glycan metabolism; osmoregulated periplasmic glucan (OPG) biosynthesis. Functionally, necessary for the succinyl substitution of periplasmic glucans. Could catalyze the transfer of succinyl residues from the cytoplasmic side of the membrane to the nascent glucan backbones on the periplasmic side of the membrane. In Shigella sonnei (strain Ss046), this protein is Glucans biosynthesis protein C.